The primary structure comprises 274 residues: MSRVGVLALGPAGVGKSTFCNSIITHMQSIGRRAHIVNLDPAAEPSEYEFTIDIRDLISLQDVMEEMDLGPNGALIYCFEFLMNNLDWLDEEIGDFNDEYLIFDCPGQIELYTHIPVLPTIVRHLQTSLNFNLCATYLLEAPFVIDRSKFFSGALSAMSAMILLELPHINILSKIDLIKNEVSKKELKKFLNPDPLLLNASSDNESNPKFAKLNKAIANLVDDFGMVQFLPLDCNKDSDSVATILSYIDDVTQWSESQEPKEPVEEIEEEVDFE.

GTP is bound at residue 13–18 (GVGKST). Positions 70–72 (GPN) match the Gly-Pro-Asn (GPN)-loop; involved in dimer interface motif. 173–176 (SKID) contacts GTP. Residues 255-274 (SESQEPKEPVEEIEEEVDFE) are disordered. The segment covering 265-274 (EEIEEEVDFE) has biased composition (acidic residues).

This sequence belongs to the GPN-loop GTPase family. In terms of assembly, heterodimers with GPN1 or GPN2. Binds to RNA polymerase II (RNAPII).

Small GTPase required for proper nuclear import of RNA polymerase II and III (RNAPII and RNAPIII). May act at an RNAP assembly step prior to nuclear import. This chain is GPN-loop GTPase 3, found in Debaryomyces hansenii (strain ATCC 36239 / CBS 767 / BCRC 21394 / JCM 1990 / NBRC 0083 / IGC 2968) (Yeast).